The following is an 88-amino-acid chain: MERNTRKTLQGKVTSARGDKTIIVEVESHRSHALYSKRYRVAKKFAVHDENNIAKVNDIVTIMETRPLSKTKHFRLVAVKQAAMQGEK.

It belongs to the universal ribosomal protein uS17 family. In terms of assembly, part of the 30S ribosomal subunit.

One of the primary rRNA binding proteins, it binds specifically to the 5'-end of 16S ribosomal RNA. This is Small ribosomal subunit protein uS17 from Mycoplasmopsis agalactiae (strain NCTC 10123 / CIP 59.7 / PG2) (Mycoplasma agalactiae).